The following is a 399-amino-acid chain: DJ-1 protein homolog F (399 aa).

2 PfpI endopeptidase domains span residues 7 to 199 (KSVL…ESLG) and 211 to 394 (TSLL…TALG).

It belongs to the peptidase C56 family. Homotrimer.

May be involved in oxidative stress response. The protein is DJ-1 protein homolog F (DJ1F) of Arabidopsis thaliana (Mouse-ear cress).